A 255-amino-acid polypeptide reads, in one-letter code: Serine/threonine-protein phosphatase PP1 (255 aa).

Residues Asp2, His4, Asp30, and Asn62 each contribute to the Mn(2+) site. His63 functions as the Proton donor in the catalytic mechanism. 2 residues coordinate Mn(2+): His111 and His186.

Belongs to the PPP phosphatase family. PP-1 subfamily. It depends on Mn(2+) as a cofactor.

It catalyses the reaction O-phospho-L-seryl-[protein] + H2O = L-seryl-[protein] + phosphate. The enzyme catalyses O-phospho-L-threonyl-[protein] + H2O = L-threonyl-[protein] + phosphate. This is Serine/threonine-protein phosphatase PP1 from Brassica napus (Rape).